The sequence spans 394 residues: Mucosal addressin cell adhesion molecule 1 (394 aa).

Residues M1 to G19 form the signal peptide. 3 Ig-like domains span residues Q20–Y107, A108–E225, and P256–G345. Residues Q20 to S353 are Extracellular-facing. N42 carries N-linked (GlcNAc...) asparagine glycosylation. 3 disulfides stabilise this stretch: C43–C89, C47–C93, and C130–C198. The segment at Q219–L255 is mucin-like. C282 and C330 are joined by a disulfide. A helical transmembrane segment spans residues M354–Y374. The Cytoplasmic portion of the chain corresponds to C375–L394.

As to quaternary structure, homodimer. In terms of tissue distribution, detected in Peyer patches and mesenteric lymph nodes but not in spleen.

It localises to the membrane. In terms of biological role, cell adhesion leukocyte receptor expressed by mucosal venules, helps to direct lymphocyte traffic into mucosal tissues including the Peyer patches and the intestinal lamina propria. It can bind both the integrin alpha-4/beta-7 and L-selectin, regulating both the passage and retention of leukocytes. In Rattus norvegicus (Rat), this protein is Mucosal addressin cell adhesion molecule 1 (Madcam1).